Consider the following 445-residue polypeptide: UDP-glucuronic acid decarboxylase 2 (445 aa).

A2 is modified (N-acetylalanine). Topologically, residues 2–43 (ASELINRRHETDQPTADAYYPKPIKPWFTVTRPMRYMLREQR) are cytoplasmic. A helical; Signal-anchor for type II membrane protein transmembrane segment spans residues 44–64 (LIFVLVGIAIATLVFTIFPRS). Residues 65 to 445 (TQSTPYSDPF…AATTTKTTSA (381 aa)) are Lumenal-facing. Position 149–174 (149–174 (DNFFTGRKENVMHHFSNPNFEMIRHD)) interacts with NAD(+). Residue R258 coordinates substrate. Y261 acts as the Proton acceptor in catalysis. An NAD(+)-binding site is contributed by 261-265 (YDEGK). N290 contributes to the substrate binding site. R302 provides a ligand contact to NAD(+). Substrate-binding positions include 303 to 307 (VVSNF), 320 to 327 (YGDGKQTR), and 387 to 391 (DPHKR).

The protein belongs to the NAD(P)-dependent epimerase/dehydratase family. UDP-glucuronic acid decarboxylase subfamily. In terms of assembly, homodimer. Requires NAD(+) as cofactor. In terms of tissue distribution, ubiquitous.

The protein resides in the golgi apparatus. The protein localises to the golgi stack membrane. It carries out the reaction UDP-alpha-D-glucuronate + H(+) = UDP-alpha-D-xylose + CO2. It participates in nucleotide-sugar biosynthesis; UDP-alpha-D-xylose biosynthesis; UDP-alpha-D-xylose from UDP-alpha-D-glucuronate: step 1/1. In terms of biological role, catalyzes the NAD-dependent decarboxylation of UDP-glucuronic acid to UDP-xylose. Necessary for the biosynthesis of the core tetrasaccharide in glycosaminoglycan biosynthesis. This is UDP-glucuronic acid decarboxylase 2 (UXS2) from Arabidopsis thaliana (Mouse-ear cress).